The chain runs to 376 residues: Peroxisomal targeting signal 2 receptor (376 aa).

WD repeat units follow at residues 58–98 (DTQD…YPVM), 102–142 (EHQR…NTSL), 182–222 (DNND…PLFM), 226–267 (AHNG…PNVH), 279–319 (GHEF…TSRV), and 339–376 (AHTE…QRLQ).

This sequence belongs to the WD repeat peroxin-7 family. Interacts with PEX20. In terms of processing, polyubiquitinated, leading to its degradation by the proteasome. Ubiquitination is dependent of PEX5 and PEX20 and takes place following recycling into the cytosol.

It localises to the cytoplasm. It is found in the cytosol. Its subcellular location is the peroxisome matrix. In terms of biological role, receptor required for the peroxisomal import of proteins containing a C-terminal PTS2-type peroxisomal targeting signal, such as 3-oxoacyl-CoA thiolase. Specifically binds to cargo proteins containing a PTS2 peroxisomal targeting signal in the cytosol. Cargo protein-binding triggers interaction with PEX20 and formation of a ternary complex composed of PEX20 and PEX7 along with PTS2-containing cargo proteins, which is tranlocated into peroxisomes by passing through the peroxisomal docking complex. PEX7 receptor is then retrotranslocated into the cytosol, where it is ubiquitinated and degraded. This Komagataella phaffii (strain GS115 / ATCC 20864) (Yeast) protein is Peroxisomal targeting signal 2 receptor.